The primary structure comprises 132 residues: Small ribosomal subunit protein uS8 (132 aa).

The protein belongs to the universal ribosomal protein uS8 family. In terms of assembly, part of the 30S ribosomal subunit. Contacts proteins S5 and S12.

One of the primary rRNA binding proteins, it binds directly to 16S rRNA central domain where it helps coordinate assembly of the platform of the 30S subunit. This chain is Small ribosomal subunit protein uS8, found in Nocardia farcinica (strain IFM 10152).